Here is a 210-residue protein sequence, read N- to C-terminus: Holliday junction resolvase RecU (210 aa).

The Mg(2+) site is built by Thr-87, Asp-89, Glu-102, and Gln-121.

This sequence belongs to the RecU family. Requires Mg(2+) as cofactor.

Its subcellular location is the cytoplasm. It catalyses the reaction Endonucleolytic cleavage at a junction such as a reciprocal single-stranded crossover between two homologous DNA duplexes (Holliday junction).. Endonuclease that resolves Holliday junction intermediates in genetic recombination. Cleaves mobile four-strand junctions by introducing symmetrical nicks in paired strands. Promotes annealing of linear ssDNA with homologous dsDNA. Required for DNA repair, homologous recombination and chromosome segregation. The polypeptide is Holliday junction resolvase RecU (Lactobacillus delbrueckii subsp. bulgaricus (strain ATCC 11842 / DSM 20081 / BCRC 10696 / JCM 1002 / NBRC 13953 / NCIMB 11778 / NCTC 12712 / WDCM 00102 / Lb 14)).